A 274-amino-acid polypeptide reads, in one-letter code: Diaminopimelate epimerase (274 aa).

Substrate is bound by residues N11 and N60. C69 functions as the Proton donor in the catalytic mechanism. Substrate-binding positions include 70–71 (GN), N191, and 209–210 (ER). The active-site Proton acceptor is the C218. 219 to 220 (GS) is a substrate binding site.

It belongs to the diaminopimelate epimerase family. Homodimer.

Its subcellular location is the cytoplasm. The enzyme catalyses (2S,6S)-2,6-diaminopimelate = meso-2,6-diaminopimelate. The protein operates within amino-acid biosynthesis; L-lysine biosynthesis via DAP pathway; DL-2,6-diaminopimelate from LL-2,6-diaminopimelate: step 1/1. Catalyzes the stereoinversion of LL-2,6-diaminopimelate (L,L-DAP) to meso-diaminopimelate (meso-DAP), a precursor of L-lysine and an essential component of the bacterial peptidoglycan. This is Diaminopimelate epimerase from Caldanaerobacter subterraneus subsp. tengcongensis (strain DSM 15242 / JCM 11007 / NBRC 100824 / MB4) (Thermoanaerobacter tengcongensis).